A 353-amino-acid polypeptide reads, in one-letter code: Ribosomal RNA large subunit methyltransferase M (353 aa).

S-adenosyl-L-methionine-binding positions include Ser-183, Ala-216 to Gly-219, Asp-235, Asp-255, and Asp-271. Lys-300 acts as the Proton acceptor in catalysis.

This sequence belongs to the class I-like SAM-binding methyltransferase superfamily. RNA methyltransferase RlmE family. RlmM subfamily. In terms of assembly, monomer.

It localises to the cytoplasm. It catalyses the reaction cytidine(2498) in 23S rRNA + S-adenosyl-L-methionine = 2'-O-methylcytidine(2498) in 23S rRNA + S-adenosyl-L-homocysteine + H(+). Its function is as follows. Catalyzes the 2'-O-methylation at nucleotide C2498 in 23S rRNA. The protein is Ribosomal RNA large subunit methyltransferase M of Azotobacter vinelandii (strain DJ / ATCC BAA-1303).